Here is a 295-residue protein sequence, read N- to C-terminus: Universal stress protein Mb2028c (295 aa).

ATP contacts are provided by residues Gly-13, Gly-117–Ala-123, Ser-131–Val-132, Gly-165, Asp-198, Gly-262–Gly-268, and Ser-276–Ser-278.

This sequence belongs to the universal stress protein A family.

This is Universal stress protein Mb2028c from Mycobacterium bovis (strain ATCC BAA-935 / AF2122/97).